Consider the following 40-residue polypeptide: MKVRNSLRALKKIPGAQIVRRRGRTFVINKNNPRMKARQG.

The protein belongs to the bacterial ribosomal protein bL36 family.

In Paenarthrobacter aurescens (strain TC1), this protein is Large ribosomal subunit protein bL36A.